A 582-amino-acid chain; its full sequence is MKRSMYAGRVREEHIGTTITLKGWVSRRRDLGGLIFIDLRDREGVMQLVINPEEVSSDVMATAERLRSEYVIEVEGFVEARQQANDKLATGMVELKVSALTILNTAKTTPFEIKDDVEVSDDTRLRYRYLDLRRPEMLENFKLRAKVTHSIRNYLDDLEFIDVETPMLTKSTPEGARDYLVPSRVSQGHFYALPQSPQITKQLLMNAGFDRYYQIVKCFRDEDLRGDRQPEFTQVDLETSFLSEQEIQDIVEGMIAKVMKETKEIDVTLPLPRMSYDVAMNSYGSDKPDTRFEMLLQDLTVTVKGIDFKVFSEAPAVKAIVVKGNADRYSRKDIDKLTEFAKQFGAKGLAWVKVTDGQLAGPVAKFLTAIETELSSQLKLAENDLVLFVADTLEVANNTLGALRNRIAKDLDMIDQSQFNFLWVVDWPMFEWSEEEGRYMSAHHPFTLPTPESAHELEGDLAKVRAIAYDIVLNGYELGGGSLRINQKEMQERMFKALGFTADEANDQFGFLLEAMDYGFPPHGGLAIGLDRFVMLLAGKDNIREVIAFPKNNKASDPMTQAPSLVSENQLEELSLQIESHD.

Residue Glu-174 participates in L-aspartate binding. The interval 198 to 201 (QITK) is aspartate. Arg-220 serves as a coordination point for L-aspartate. ATP-binding positions include 220-222 (RDE) and Gln-229. His-443 provides a ligand contact to L-aspartate. Glu-477 is a binding site for ATP. Position 484 (Arg-484) interacts with L-aspartate. Residue 529–532 (GLDR) participates in ATP binding.

The protein belongs to the class-II aminoacyl-tRNA synthetase family. Type 1 subfamily. Homodimer.

The protein localises to the cytoplasm. The catalysed reaction is tRNA(Asp) + L-aspartate + ATP = L-aspartyl-tRNA(Asp) + AMP + diphosphate. Catalyzes the attachment of L-aspartate to tRNA(Asp) in a two-step reaction: L-aspartate is first activated by ATP to form Asp-AMP and then transferred to the acceptor end of tRNA(Asp). In Streptococcus pyogenes serotype M3 (strain ATCC BAA-595 / MGAS315), this protein is Aspartate--tRNA ligase.